Here is a 257-residue protein sequence, read N- to C-terminus: MNKQRFLFAAKISGIHFLLSFVVALALAGLIFFVWYPFPYQKIMGSFKLFFLISGIDVCCGPLLTFILSNPQKRLKECIIDFSLIIFIQLSAFIYGMYNIYLARPVAVVFELDSIRILSKGDILLDELPQALPEFRQFPYFGHHLLAVRGWKNAEERKEGVEKAFQGFDIAQRPTLWVAYSSELEKIRKAAKPLAQSFSKLNAKQQQDVKTALQKARLNMEEAFFLPLVSNRSMEWMVILDKNMNITTAVEIDAFEL.

The sequence is that of Fimbrial assembly protein, serogroup E1 (fimB) from Dichelobacter nodosus (Bacteroides nodosus).